A 364-amino-acid polypeptide reads, in one-letter code: Glutamine synthetase (364 aa).

Positions 15 to 94 (VLAEYIWIDA…VLAECWNNDG (80 aa)) constitute a GS beta-grasp domain. The GS catalytic domain maps to 101 to 364 (HRHECAKLMS…ETKRGEEEGF (264 aa)).

The protein belongs to the glutamine synthetase family. Homooctamer.

The protein resides in the cytoplasm. It carries out the reaction L-glutamate + NH4(+) + ATP = L-glutamine + ADP + phosphate + H(+). The protein is Glutamine synthetase (GLN1) of Yarrowia lipolytica (strain CLIB 122 / E 150) (Yeast).